Reading from the N-terminus, the 554-residue chain is Hydroxylamine reductase (554 aa).

Residues Cys3, Cys6, Cys18, and Cys25 each coordinate [2Fe-2S] cluster. Residues His252, Glu276, Cys320, Cys408, Cys436, Cys461, Glu495, and Lys497 each contribute to the hybrid [4Fe-2O-2S] cluster site. Cys408 bears the Cysteine persulfide mark.

It belongs to the HCP family. The cofactor is [2Fe-2S] cluster. Hybrid [4Fe-2O-2S] cluster is required as a cofactor.

It localises to the cytoplasm. The enzyme catalyses A + NH4(+) + H2O = hydroxylamine + AH2 + H(+). Its function is as follows. Catalyzes the reduction of hydroxylamine to form NH(3) and H(2)O. This chain is Hydroxylamine reductase, found in Shewanella putrefaciens (strain CN-32 / ATCC BAA-453).